A 197-amino-acid polypeptide reads, in one-letter code: UPF0251 protein CT1277 (197 aa).

Positions 138–197 (GGGFGGGRRGGGKCRGFRSGLDRGPGHGEGRCQGEGHGNGNGNGNGQGRMRRNQQEGGEV) are disordered. Residues 157-171 (GLDRGPGHGEGRCQG) are compositionally biased toward basic and acidic residues. Positions 172-184 (EGHGNGNGNGNGQ) are enriched in gly residues.

It belongs to the UPF0251 family.

This chain is UPF0251 protein CT1277, found in Chlorobaculum tepidum (strain ATCC 49652 / DSM 12025 / NBRC 103806 / TLS) (Chlorobium tepidum).